We begin with the raw amino-acid sequence, 149 residues long: Aquaporin-like protein 2 (149 aa).

Residues 1-35 (MSNESNDLEKNISHLDPTGVDNAYIPPEQPETKHS) are disordered. The Cytoplasmic portion of the chain corresponds to 1–47 (MSNESNDLEKNISHLDPTGVDNAYIPPEQPETKHSRFNIDRGTLRNH). The helical transmembrane segment at 48 to 68 (FIAAVGEFCGTFMFLWCAYVI) threads the bilayer. Over 69–89 (CNVANHDVALTTEPEGSHPGQ) the chain is Extracellular. Residues 90 to 110 (LIMIALGFGFSVMFSIWCFWW) traverse the membrane as a helical segment. Over 111–149 (GFEPSRFSLFVFGQSHLTSQMCSDVVSSDHCWDGCWWCR) the chain is Cytoplasmic.

The protein belongs to the MIP/aquaporin (TC 1.A.8) family.

It localises to the endoplasmic reticulum membrane. It is found in the cell membrane. Its function is as follows. Water channel required to facilitate the transport of water across membranes. Involved in freeze tolerance, osmotolerance and cell flocculation in liquid cultures. Is non-functional in most laboratory strains. The chain is Aquaporin-like protein 2 (AQY2-2) from Saccharomyces cerevisiae (strain Lalvin EC1118 / Prise de mousse) (Baker's yeast).